We begin with the raw amino-acid sequence, 263 residues long: Interleukin-33 (263 aa).

Over residues 1–17 the composition is skewed to polar residues; sequence MKYSTTKIPPAKMNSSA. The tract at residues 1-28 is disordered; sequence MKYSTTKIPPAKMNSSADKALVKSPKLR. The segment at 1 to 65 is homeodomain-like HTH domain; it reads MKYSTTKIPP…CYFRKEITKR (65 aa). The interaction with RELA stretch occupies residues 62-103; that stretch reads ITKRYSPRTAEKCRKQCLVFTACHQQLNKDFTSDVPMLQKCF.

Belongs to the IL-1 family. Highly divergent. As to quaternary structure, forms a 1:1:1 heterotrimeric complex with its primary high-affinity receptor IL1RL1 and the coreceptor IL1RAP. Interacts with cargo receptor TMED10; the interaction mediates the translocation from the cytoplasm into the ERGIC (endoplasmic reticulum-Golgi intermediate compartment) and thereby secretion. Post-translationally, the full-length protein can be released from cells and is able to signal via the IL1RL1/ST2 receptor. However, proteolytic processing by CELA1, CSTG/cathepsin G and ELANE/neutrophil elastase produces C-terminal peptides that are more active than the unprocessed full-length protein. May also be proteolytically processed by calpains. Proteolytic cleavage mediated by apoptotic caspases including CASP3 and CASP7 results in IL33 inactivation. In vitro proteolytic cleavage by CASP1 was reported but could not be confirmed in vivo suggesting that IL33 is probably not a direct substrate for that caspase. As to expression, expressed in cultured umbilical artery smooth muscle cells after stimulation with IL1A and IL1B, and to a lesser extent with IFNG. Expressed in vasospastic cerebral arteries after subarachnoid hemorrhage.

The protein resides in the nucleus. It is found in the chromosome. Its subcellular location is the cytoplasm. It localises to the cytoplasmic vesicle. The protein localises to the secretory vesicle. The protein resides in the secreted. Cytokine that binds to and signals through the IL1RL1/ST2 receptor which in turn activates NF-kappa-B and MAPK signaling pathways in target cells. Involved in the maturation of Th2 cells inducing the secretion of T-helper type 2-associated cytokines. Also involved in activation of mast cells, basophils, eosinophils and natural killer cells. Acts as a chemoattractant for Th2 cells, and may function as an 'alarmin', that amplifies immune responses during tissue injury. Induces rapid UCP2-dependent mitochondrial rewiring that attenuates the generation of reactive oxygen species and preserves the integrity of Krebs cycle required for persistent production of itaconate and subsequent GATA3-dependent differentiation of inflammation-resolving alternatively activated macrophages. In terms of biological role, in quiescent endothelia the uncleaved form is constitutively and abundantly expressed, and acts as a chromatin-associated nuclear factor with transcriptional repressor properties, it may sequester nuclear NF-kappaB/RELA, lowering expression of its targets. This form is rapidely lost upon angiogenic or pro-inflammatory activation. The polypeptide is Interleukin-33 (IL33) (Canis lupus familiaris (Dog)).